Consider the following 164-residue polypeptide: MTRTSDKAPTQRQLRVGEEIRHALAEVFERGTVRDPAVAGVALTVTEVRISPDLRNATVFLVRLGGGPLDEVLTGLRKARAFLRREVAIRIHTKFVPDLRFESDPSFDYAEYINGLLHRPEVARDLGVPPSGEDDGDDEADDEDDDGGEEGPGAAAPPPADEGR.

A disordered region spans residues 123–164; it reads ARDLGVPPSGEDDGDDEADDEDDDGGEEGPGAAAPPPADEGR. The span at 132 to 149 shows a compositional bias: acidic residues; that stretch reads GEDDGDDEADDEDDDGGE. The span at 155–164 shows a compositional bias: pro residues; it reads AAPPPADEGR.

It belongs to the RbfA family. Monomer. Binds 30S ribosomal subunits, but not 50S ribosomal subunits or 70S ribosomes.

It localises to the cytoplasm. Functionally, one of several proteins that assist in the late maturation steps of the functional core of the 30S ribosomal subunit. Associates with free 30S ribosomal subunits (but not with 30S subunits that are part of 70S ribosomes or polysomes). Required for efficient processing of 16S rRNA. May interact with the 5'-terminal helix region of 16S rRNA. In Rhodospirillum rubrum (strain ATCC 11170 / ATH 1.1.1 / DSM 467 / LMG 4362 / NCIMB 8255 / S1), this protein is Ribosome-binding factor A.